Reading from the N-terminus, the 1328-residue chain is 5'-3' exoribonuclease 1 (1328 aa).

Residues 1211-1328 (AGKNRKTNVS…VQPMGKLQIN (118 aa)) are disordered. Positions 1217–1231 (TNVSANNVSQGTDSR) are enriched in polar residues. Positions 1275 to 1286 (HKSKSKFSKGNH) are enriched in basic residues.

The protein belongs to the 5'-3' exonuclease family. As to quaternary structure, monomer. Mg(2+) serves as cofactor.

It localises to the cytoplasm. It is found in the perinuclear region. The protein localises to the P-body. Its activity is regulated as follows. Strand exchange activity is enhanced by fatty acid synthase (stimulatory factor P190/210). Multifunctional protein that exhibits several independent functions at different levels of the cellular processes. 5'-3' exonuclease component of the nonsense-mediated mRNA decay (NMD) which is a highly conserved mRNA degradation pathway, an RNA surveillance system whose role is to identify and rid cells of mRNA with premature termination codons and thus prevents accumulation of potentially harmful truncated proteins. Involved in the degradation of several hypomodified mature tRNA species and participates in the 5'-processing or the degradation of the snoRNA precursors and rRNA processing. This Schizosaccharomyces pombe (strain 972 / ATCC 24843) (Fission yeast) protein is 5'-3' exoribonuclease 1 (exo2).